The primary structure comprises 173 residues: Alpha-crystallin A chain (173 aa).

Position 1 is an N-acetylmethionine (M1). The tract at residues 1 to 63 (MDIAIQHPWF…RTVLDSGISE (63 aa)) is required for complex formation with BFSP1 and BFSP2. Q6 bears the Deamidated glutamine; partial mark. K11 is a glycosylation site (N-linked (Glc) (glycation) lysine). Phosphoserine is present on S45. Deamidated glutamine; partial is present on Q50. The region spanning 52 to 162 (LFRTVLDSGI…GHSERAIPVS (111 aa)) is the sHSP domain. Residue K70 is modified to N6-acetyllysine. N-linked (Glc) (glycation) lysine glycosylation is present at K78. Q90 is subject to Deamidated glutamine; partial. K99 carries the N6-acetyllysine modification. A Zn(2+)-binding site is contributed by H100. N101 carries the deamidated asparagine; partial modification. Zn(2+) contacts are provided by E102 and H107. S122 carries the post-translational modification Phosphoserine. N123 is modified (deamidated asparagine; partial). The tract at residues 144–173 (PKIPSGVDAGHSERAIPVSREEKPSSAPSS) is disordered. Over residues 153 to 167 (GHSERAIPVSREEKP) the composition is skewed to basic and acidic residues. H154 serves as a coordination point for Zn(2+). Positions 157–163 (RAIPVSR) are important for oligomerization. An O-linked (GlcNAc) serine glycan is attached at S162.

This sequence belongs to the small heat shock protein (HSP20) family. Heteromer composed of three CRYAA and one CRYAB subunits. Inter-subunit bridging via zinc ions enhances stability, which is crucial as there is no protein turn over in the lens. Can also form homodimers and homotetramers (dimers of dimers) which serve as the building blocks of homooligomers. Within homooligomers, the zinc-binding motif is created from residues of 3 different molecules. His-100 and Glu-102 from one molecule are ligands of the zinc ion, and His-107 and His-154 residues from additional molecules complete the site with tetrahedral coordination geometry. Part of a complex required for lens intermediate filament formation composed of BFSP1, BFSP2 and CRYAA. In terms of processing, acetylation at Lys-70 may increase chaperone activity. Undergoes age-dependent proteolytical cleavage at the C-terminus.

The protein resides in the cytoplasm. It is found in the nucleus. In terms of biological role, contributes to the transparency and refractive index of the lens. Acts as a chaperone, preventing aggregation of various proteins under a wide range of stress conditions. Required for the correct formation of lens intermediate filaments as part of a complex composed of BFSP1, BFSP2 and CRYAA. This is Alpha-crystallin A chain (CRYAA) from Bos taurus (Bovine).